Consider the following 194-residue polypeptide: WASH complex subunit 3 (194 aa).

The residue at position 1 (Met-1) is an N-acetylmethionine. The stretch at Thr-46–Ser-74 forms a coiled coil. Disordered regions lie at residues Ser-93 to Glu-121 and Glu-159 to Asp-194. A compositionally biased stretch (polar residues) spans Thr-103–Glu-121.

Belongs to the CCDC53 family. In terms of assembly, component of the WASH core complex also described as WASH regulatory complex (SHRC) composed of WASH (WASHC1, WASH2P or WASH3P), WASHC2 (WASHC2A or WASHC2C), WASHC3, WASHC4 and WASHC5. The WASH core complex associates via WASHC2 with the F-actin-capping protein dimer (formed by CAPZA1, CAPZA2 or CAPZA3 and CAPZB) in a transient or substoichiometric manner which was initially described as WASH complex.

The protein localises to the early endosome. Acts as a component of the WASH core complex that functions as a nucleation-promoting factor (NPF) at the surface of endosomes, where it recruits and activates the Arp2/3 complex to induce actin polymerization, playing a key role in the fission of tubules that serve as transport intermediates during endosome sorting. This Homo sapiens (Human) protein is WASH complex subunit 3.